A 288-amino-acid chain; its full sequence is Centromere protein P (288 aa).

A coiled-coil region spans residues 1–71 (MDAELAEVRA…HLESELSFLS (71 aa)). The residue at position 38 (Ser-38) is a Phosphoserine.

Belongs to the CENP-P/CTF19 family. In terms of assembly, component of the CENPA-CAD complex, composed of CENPI, CENPK, CENPL, CENPO, CENPP, CENPQ, CENPR and CENPS. The CENPA-CAD complex interacts with the CENPA-NAC complex, at least composed of CENPA, CENPC, CENPH, CENPM, CENPN, CENPT and CENPU.

The protein localises to the nucleus. The protein resides in the chromosome. It localises to the centromere. Functionally, component of the CENPA-CAD (nucleosome distal) complex, a complex recruited to centromeres which is involved in assembly of kinetochore proteins, mitotic progression and chromosome segregation. May be involved in incorporation of newly synthesized CENPA into centromeres via its interaction with the CENPA-NAC complex. The sequence is that of Centromere protein P (CENPP) from Homo sapiens (Human).